Here is a 620-residue protein sequence, read N- to C-terminus: Synchronized import protein 1 (620 aa).

The tract at residues 1–32 (MGRSKKRSRASSSRLNPLRKAGSNDNNKDTNV) is disordered. ARM repeat units follow at residues 25-64 (DNNKDTNVVNKKLQPLLQNLSSVVPNDRSIALSSISVLCE), 66-106 (AHMR…NLSL), 181-221 (DDIL…TTLD), 258-299 (ANEL…NIDP), 340-386 (IKLQ…NFLP), 435-470 (DSQDDLSIKIGRMGCIWALLKLIFPDGAFESENRAL), 471-510 (INVQMLNNSGFARGIIEEFQNNNDLELQQKCINVLSTYAM), and 564-607 (RGGF…TLDS).

This sequence belongs to the nuclear import and ribosome assembly adapter family. In terms of assembly, forms a heterotrimeric complex with RPL5 and RPL11A or RPL11B; interaction of this complex with KAP104 allows the nuclear import of the heterotrimer. Component of a hexameric 5S RNP precursor complex, composed of 5S RNA, RRS1, RPF2, RPL5, RPL11A/RPL11B and SYO1; this complex acts as a precursor for ribosome assembly.

It is found in the cytoplasm. Its subcellular location is the nucleus. In terms of biological role, nuclear import adapter that specifically recruits the two functionally and topologically linked ribosomal proteins RPL5 and RPL11 (encoded by RPL11A and RPL11B). Guarantees that this cargo pair remains bound together from the time of synthesis in the cytoplasm until delivery to the nascent 5S rRNA in the nucleus. The chain is Synchronized import protein 1 (SYO1) from Saccharomyces cerevisiae (strain ATCC 204508 / S288c) (Baker's yeast).